Reading from the N-terminus, the 270-residue chain is ParA family protein MPN_688 (270 aa).

The protein belongs to the ParA family.

In Mycoplasma pneumoniae (strain ATCC 29342 / M129 / Subtype 1) (Mycoplasmoides pneumoniae), this protein is ParA family protein MPN_688.